The primary structure comprises 401 residues: Acetate kinase (401 aa).

Mg(2+) is bound at residue asparagine 10. Position 17 (lysine 17) interacts with ATP. Arginine 91 provides a ligand contact to substrate. Aspartate 150 serves as the catalytic Proton donor/acceptor. ATP-binding positions include 210-214 (HLGNG), 285-287 (DCR), and 333-337 (GIGEN). Glutamate 387 contacts Mg(2+).

This sequence belongs to the acetokinase family. Homodimer. It depends on Mg(2+) as a cofactor. Mn(2+) is required as a cofactor.

The protein resides in the cytoplasm. It carries out the reaction acetate + ATP = acetyl phosphate + ADP. The protein operates within metabolic intermediate biosynthesis; acetyl-CoA biosynthesis; acetyl-CoA from acetate: step 1/2. Functionally, catalyzes the formation of acetyl phosphate from acetate and ATP. Can also catalyze the reverse reaction. This is Acetate kinase from Pasteurella multocida (strain Pm70).